The chain runs to 228 residues: UPF0758 protein CLD_1541 (228 aa).

In terms of domain architecture, MPN spans 106 to 228; it reads KINTPLDVSN…YVSMKEKGTI (123 aa). Zn(2+) contacts are provided by H177, H179, and D190. A JAMM motif motif is present at residues 177–190; sequence HNHPSGDPTPSKED.

This sequence belongs to the UPF0758 family.

The protein is UPF0758 protein CLD_1541 of Clostridium botulinum (strain Okra / Type B1).